Consider the following 156-residue polypeptide: CD-NTase-associated protein 8 (156 aa).

The protein belongs to the bacterial HORMA family. HORMA3 subfamily. As to quaternary structure, interacts with Cap7 (also called HORMA2) and CdnC; forms CdnD:Cap7:Cap8 (also called CdnD:HORMA2:HORMA3) complexes with stoichiometries of 1:1:1 and 2:1:1.

Functionally, CBASS (cyclic oligonucleotide-based antiphage signaling system) provides immunity against bacteriophage. The CD-NTase protein synthesizes cyclic nucleotides in response to infection; these serve as specific second messenger signals. The signals activate a diverse range of effectors, leading to bacterial cell death and thus abortive phage infection. A type III-C(AAA) CBASS system. Its function is as follows. A member of the CBASS system in this bacteria. It does not seem to bind a closure peptide, its exact function is unknown. The protein is CD-NTase-associated protein 8 of Pseudomonas aeruginosa.